Reading from the N-terminus, the 207-residue chain is LexA repressor (207 aa).

The segment at residues 28-48 (RAEIASRLGFKSANAAEEHLK) is a DNA-binding region (H-T-H motif). Residues S124 and K161 each act as for autocatalytic cleavage activity in the active site.

It belongs to the peptidase S24 family. As to quaternary structure, homodimer.

The catalysed reaction is Hydrolysis of Ala-|-Gly bond in repressor LexA.. In terms of biological role, represses a number of genes involved in the response to DNA damage (SOS response), including recA and lexA. In the presence of single-stranded DNA, RecA interacts with LexA causing an autocatalytic cleavage which disrupts the DNA-binding part of LexA, leading to derepression of the SOS regulon and eventually DNA repair. In Shewanella amazonensis (strain ATCC BAA-1098 / SB2B), this protein is LexA repressor.